Consider the following 396-residue polypeptide: NASP-related protein sim3 (396 aa).

The tract at residues 1–31 is disordered; it reads MSSDTKTLENSKGNSATDADTKNPSSSDSRA. TPR repeat units lie at residues 32–65 and 89–122; these read IEQL…SESI and IENS…GSFT. Positions 135 to 164 are disordered; sequence NEENSSIAHPEKESEEKETNEASPASEEDE. Basic and acidic residues predominate over residues 143–154; that stretch reads HPEKESEEKETN. Residues 199-232 form a TPR 3 repeat; that stretch reads ADIYDLLGELSLEIENFSQASQDLKTALEWKEKV. Positions 267-329 form a coiled coil; sequence CEHVEKAAEI…QKTLDLKHGA (63 aa). Basic and acidic residues predominate over residues 284 to 301; it reads RENEVTDKKGKGKQKAEE. Disordered stretches follow at residues 284–307 and 334–396; these read RENE…LTSD and EAVM…KKKD. Over residues 343–353 the composition is skewed to low complexity; the sequence is SSLLSKDSSSL.

Belongs to the NASP family. Interacts with cnp1, hht1, hht2 and hht3; has a preference for CENP-A (cnp1) over histone H3 (hht1/2/3).

It is found in the nucleus. Its function is as follows. Histone H3 and H3-like CENP-A-specific chaperone. Promotes delivery and incorporation of CENP-A in centromeric chromatin, probably by escorting nascent CENP-A to CENP-A chromatin assembly factors. Required for central core silencing and normal chromosome segregation. In Schizosaccharomyces pombe (strain 972 / ATCC 24843) (Fission yeast), this protein is NASP-related protein sim3 (sim3).